A 216-amino-acid chain; its full sequence is Probable GTP-binding protein EngB (216 aa).

The 175-residue stretch at 27–201 (EGIEVAFAGR…REKLDTWFSE (175 aa)) folds into the EngB-type G domain. GTP-binding positions include 35–42 (GRSNAGKS), 62–66 (GRTQL), 80–83 (DLPG), 147–150 (TKAD), and 180–182 (FSS). 2 residues coordinate Mg(2+): Ser-42 and Thr-64.

It belongs to the TRAFAC class TrmE-Era-EngA-EngB-Septin-like GTPase superfamily. EngB GTPase family. Mg(2+) is required as a cofactor.

Functionally, necessary for normal cell division and for the maintenance of normal septation. The sequence is that of Probable GTP-binding protein EngB from Yersinia pseudotuberculosis serotype O:1b (strain IP 31758).